The primary structure comprises 130 residues: MIGDWNNGTGRRKSSVARVFLKKGSGKITVNGKDIQEYFGRETSIMIAKQPLALTSNLEAFDIQVNVHGGGESGQAGATRHGITRALIDYDAALKPVLSQAGFVTRDAREVERKKVGLRSARRAKQFSKR.

The protein belongs to the universal ribosomal protein uS9 family.

The polypeptide is Small ribosomal subunit protein uS9 (Delftia acidovorans (strain DSM 14801 / SPH-1)).